Consider the following 314-residue polypeptide: Olfactory receptor 5B3 (314 aa).

The Extracellular segment spans residues 1–23 (MENKTEVTQFILLGLTNDSELQV). Asn-3 and Asn-17 each carry an N-linked (GlcNAc...) asparagine glycan. A helical transmembrane segment spans residues 24–44 (PLFITFPFIYIITLVGNLGII). Residues 45 to 52 (VLIFWDSC) are Cytoplasmic-facing. The helical transmembrane segment at 53–73 (LHNPMYFFLSNLSLVDFCYSS) threads the bilayer. The Extracellular portion of the chain corresponds to 74–97 (AVTPIVMAGFLIEDKVISYNACAA). An intrachain disulfide couples Cys-95 to Cys-187. The helical transmembrane segment at 98-118 (QMYIFVAFATVENYLLASMAY) threads the bilayer. Over 119–131 (DRYAAVCKPLHYT) the chain is Cytoplasmic. The chain crosses the membrane as a helical span at residues 132–152 (TTMTTTVCARLAIGSYLCGFL). Asn-153 carries an N-linked (GlcNAc...) asparagine glycan. Residues 153 to 194 (NASIHTGDTFSLSFCKSNEVHHFFCDIPAVMVLSCSDRHISE) are Extracellular-facing. The chain crosses the membrane as a helical span at residues 195 to 215 (LVLIYVVSFNIFIALLVILIS). The Cytoplasmic portion of the chain corresponds to 216–235 (YTFIFITILKMHSASVYQKP). The chain crosses the membrane as a helical span at residues 236–256 (LSTCASHFIAVGIFYGTIIFM). Residues 257 to 269 (YLQPSSSHSMDTD) are Extracellular-facing. A helical transmembrane segment spans residues 270–290 (KMAPVFYTMVIPMLNPLVYSL). The Cytoplasmic portion of the chain corresponds to 291–314 (RNKEVKSAFKKVVEKAKLSVGWSV).

This sequence belongs to the G-protein coupled receptor 1 family.

It is found in the cell membrane. Its function is as follows. Odorant receptor. The protein is Olfactory receptor 5B3 (OR5B3) of Homo sapiens (Human).